We begin with the raw amino-acid sequence, 137 residues long: Holo-[acyl-carrier-protein] synthase (137 aa).

Mg(2+) is bound by residues D8 and E61.

Belongs to the P-Pant transferase superfamily. AcpS family. The cofactor is Mg(2+).

It is found in the cytoplasm. The catalysed reaction is apo-[ACP] + CoA = holo-[ACP] + adenosine 3',5'-bisphosphate + H(+). Transfers the 4'-phosphopantetheine moiety from coenzyme A to a Ser of acyl-carrier-protein. The protein is Holo-[acyl-carrier-protein] synthase of Afipia carboxidovorans (strain ATCC 49405 / DSM 1227 / KCTC 32145 / OM5) (Oligotropha carboxidovorans).